The sequence spans 265 residues: Sulfur carrier protein FdhD (265 aa).

Cysteine 107 serves as the catalytic Cysteine persulfide intermediate.

It belongs to the FdhD family.

Its subcellular location is the cytoplasm. Functionally, required for formate dehydrogenase (FDH) activity. Acts as a sulfur carrier protein that transfers sulfur from IscS to the molybdenum cofactor prior to its insertion into FDH. The chain is Sulfur carrier protein FdhD from Staphylococcus aureus (strain NCTC 8325 / PS 47).